A 1501-amino-acid chain; its full sequence is Inactive protein tyrosine kinase pTKL (1501 aa).

N-linked (GlcNAc...) asparagine glycosylation is found at Asn-64, Asn-128, and Asn-133. Positions 204 to 221 are enriched in basic residues; the sequence is KKNKKNKKNKKKKNKKTK. The tract at residues 204–223 is disordered; the sequence is KKNKKNKKNKKKKNKKTKNT. Residues Asn-239, Asn-242, Asn-258, and Asn-327 are each glycosylated (N-linked (GlcNAc...) asparagine). Basic and acidic residues predominate over residues 257 to 273; that stretch reads MNISLHEKNDKKNEKKN. A disordered region spans residues 257-276; that stretch reads MNISLHEKNDKKNEKKNEKK. Positions 301 to 366 constitute an SAM domain; the sequence is WSLREVIQWL…LQLIKNLQVM (66 aa). The segment at 392 to 425 is disordered; sequence NKNIKKGKNIKKEKKKKKEKNIKKEKKKKKKETK. Basic residues predominate over residues 394 to 424; that stretch reads NIKKGKNIKKEKKKKKEKNIKKEKKKKKKET. A coiled-coil region spans residues 399 to 433; it reads KNIKKEKKKKKEKNIKKEKKKKKKETKKFNNMDKK. 3 N-linked (GlcNAc...) asparagine glycosylation sites follow: Asn-448, Asn-463, and Asn-471. The RVxF motif 1 motif lies at 483 to 486; it reads KVSF. Asn-506 carries an N-linked (GlcNAc...) asparagine glycan. Over residues 543 to 597 the composition is skewed to low complexity; it reads QLSSPLSSPLSSPSPSSSPSSSPSSSPSSSPSSSPSPSSSPSPSSSPSSSPSSSP. The interval 543–607 is disordered; the sequence is QLSSPLSSPL…SSPPSPLSYK (65 aa). N-linked (GlcNAc...) asparagine glycosylation is present at Asn-652. The segment at 659–678 is disordered; it reads IKKSKSKYNNDKKEQKKLPL. Over residues 666–675 the composition is skewed to basic and acidic residues; the sequence is YNNDKKEQKK. N-linked (GlcNAc...) asparagine glycans are attached at residues Asn-681, Asn-712, Asn-737, Asn-811, and Asn-819. ATP contacts are provided by residues 836–844 and Lys-864; that span reads QNINNFGKY. Asn-1024, Asn-1031, Asn-1074, and Asn-1157 each carry an N-linked (GlcNAc...) asparagine glycan. The Protein kinase domain maps to 1088-1483; it reads FHYQHNVLCG…HILKTISTLY (396 aa). The short motif at 1238-1241 is the RVxF motif 2 element; it reads KVLF. N-linked (GlcNAc...) asparagine glycosylation occurs at Asn-1382.

The protein belongs to the protein kinase superfamily. TKL Ser/Thr protein kinase family. Interacts (via RVxF motif 1 and/or 2) with phosphatase PP1C. May interact (via SAM domain) with SERA5 (via C-terminus).

The protein resides in the parasitophorous vacuole. It localises to the host cell membrane. Its subcellular location is the host cytoplasm. It is found in the host cytoskeleton. This Plasmodium falciparum (isolate 3D7) protein is Inactive protein tyrosine kinase pTKL.